The following is a 123-amino-acid chain: Prostate stem cell antigen (123 aa).

The signal sequence occupies residues 1–20; the sequence is MKTVFFLLLATYLALHPGAA. The UPAR/Ly6 domain maps to 21 to 95; it reads LQCYSCTAQM…CCYSDLCNVN (75 aa). Disulfide bonds link Cys-23–Cys-48, Cys-26–Cys-35, Cys-41–Cys-66, Cys-70–Cys-86, and Cys-87–Cys-92. Asn-40 carries an N-linked (GlcNAc...) asparagine glycan. Residue Asn-95 is the site of GPI-anchor amidated asparagine attachment. Positions 96-123 are cleaved as a propeptide — removed in mature form; the sequence is GAHTLKPPTTLGLLTVLCSLLLWGSSRL.

In terms of assembly, interacts with CHRNA4. As to expression, predominantly expressed in prostate. Also found in spleen, liver, lung, prostate, kidney and testis. Expressed in brain cortex; expression is increased in transgenic mouse model of Alzheimer disease (at protein level).

The protein resides in the cell membrane. In terms of biological role, may be involved in the regulation of cell proliferation. Its function is as follows. May act as a modulator of nicotinic acetylcholine receptors (nAChRs) activity. In vitro inhibits nicotine-induced signaling probably implicating alpha-3:beta-2- or alpha-7-containing nAChRs. In Mus musculus (Mouse), this protein is Prostate stem cell antigen (Psca).